The primary structure comprises 1106 residues: Carbamoyl phosphate synthase large chain (1106 aa).

Positions Met-1–Glu-402 are carboxyphosphate synthetic domain. Positions 129, 169, 175, 176, 208, 210, 215, 241, 242, 243, 285, and 299 each coordinate ATP. The ATP-grasp 1 domain occupies Lys-133 to Leu-328. Gln-285, Glu-299, and Asn-301 together coordinate Mg(2+). Positions 285, 299, and 301 each coordinate Mn(2+). The oligomerization domain stretch occupies residues Gln-403–Asp-546. The tract at residues Glu-547–Asn-956 is carbamoyl phosphate synthetic domain. Residues Ala-677–Thr-868 enclose the ATP-grasp 2 domain. ATP contacts are provided by Arg-713, Arg-752, Leu-754, Glu-759, Gly-784, Ile-785, His-786, Ser-787, Gln-827, and Glu-839. The Mg(2+) site is built by Gln-827, Glu-839, and Asn-841. Residues Gln-827, Glu-839, and Asn-841 each contribute to the Mn(2+) site. An MGS-like domain is found at Asn-957–Val-1106. An allosteric domain region spans residues Asn-957–Val-1106.

Belongs to the CarB family. As to quaternary structure, composed of two chains; the small (or glutamine) chain promotes the hydrolysis of glutamine to ammonia, which is used by the large (or ammonia) chain to synthesize carbamoyl phosphate. Tetramer of heterodimers (alpha,beta)4. It depends on Mg(2+) as a cofactor. The cofactor is Mn(2+).

It catalyses the reaction hydrogencarbonate + L-glutamine + 2 ATP + H2O = carbamoyl phosphate + L-glutamate + 2 ADP + phosphate + 2 H(+). The enzyme catalyses hydrogencarbonate + NH4(+) + 2 ATP = carbamoyl phosphate + 2 ADP + phosphate + 2 H(+). The protein operates within amino-acid biosynthesis; L-arginine biosynthesis; carbamoyl phosphate from bicarbonate: step 1/1. It participates in pyrimidine metabolism; UMP biosynthesis via de novo pathway; (S)-dihydroorotate from bicarbonate: step 1/3. In terms of biological role, large subunit of the glutamine-dependent carbamoyl phosphate synthetase (CPSase). CPSase catalyzes the formation of carbamoyl phosphate from the ammonia moiety of glutamine, carbonate, and phosphate donated by ATP, constituting the first step of 2 biosynthetic pathways, one leading to arginine and/or urea and the other to pyrimidine nucleotides. The large subunit (synthetase) binds the substrates ammonia (free or transferred from glutamine from the small subunit), hydrogencarbonate and ATP and carries out an ATP-coupled ligase reaction, activating hydrogencarbonate by forming carboxy phosphate which reacts with ammonia to form carbamoyl phosphate. This is Carbamoyl phosphate synthase large chain from Renibacterium salmoninarum (strain ATCC 33209 / DSM 20767 / JCM 11484 / NBRC 15589 / NCIMB 2235).